Reading from the N-terminus, the 447-residue chain is Phosphoglucosamine mutase (447 aa).

Ser-102 serves as the catalytic Phosphoserine intermediate. 4 residues coordinate Mg(2+): Ser-102, Asp-241, Asp-243, and Asp-245. Phosphoserine is present on Ser-102.

The protein belongs to the phosphohexose mutase family. Mg(2+) is required as a cofactor. Activated by phosphorylation.

The catalysed reaction is alpha-D-glucosamine 1-phosphate = D-glucosamine 6-phosphate. In terms of biological role, catalyzes the conversion of glucosamine-6-phosphate to glucosamine-1-phosphate. In Ruegeria sp. (strain TM1040) (Silicibacter sp.), this protein is Phosphoglucosamine mutase.